Here is a 210-residue protein sequence, read N- to C-terminus: HTH-type transcriptional repressor ComR (210 aa).

An HTH tetR-type domain is found at 18-78 (VFDRDAALDK…AVLDRYIDRF (61 aa)). The segment at residues 41 to 60 (SLADLVEATGAKAPTLYAEF) is a DNA-binding region (H-T-H motif).

Its activity is regulated as follows. Binding to the promoter region of BhsA/ComC is released in the presence of copper. Functionally, represses expression of BhsA/ComC by binding to its promoter region in the absence of copper. The sequence is that of HTH-type transcriptional repressor ComR (comR) from Escherichia coli (strain K12).